Here is a 490-residue protein sequence, read N- to C-terminus: Muscarinic acetylcholine receptor M4 (490 aa).

The Extracellular portion of the chain corresponds to 1 to 42 (MHNLSAQPWQAKMANLTYDNVTLSNRSEVAIQPPTNYKTVEL). Residues Asn-3, Asn-15, Asn-20, and Asn-25 are each glycosylated (N-linked (GlcNAc...) asparagine). The chain crosses the membrane as a helical span at residues 43–64 (VFIATVTGSLSLVTVVGNILVM). Topologically, residues 65–78 (LSIKVNRQLQTVNN) are cytoplasmic. Residues 79–99 (YFLFSLACADLIIGVFSMNLY) form a helical membrane-spanning segment. Over 100 to 116 (TVYIIKGYWPLGAVVCD) the chain is Extracellular. Cys-115 and Cys-195 are disulfide-bonded. A helical transmembrane segment spans residues 117 to 138 (LWLALDYVVSNASVMNLLIISF). Residues 139-158 (DRYFCVTKPLTYPARRTTKM) are Cytoplasmic-facing. A helical transmembrane segment spans residues 159-181 (AGLMIAAAWILSFILWAPAILFW). Residues 182 to 203 (QFIVGKRTVHERECYIQFLSNP) are Extracellular-facing. The helical transmembrane segment at 204-226 (AVTFGTAIAAFYLPVVIMTVLYI) threads the bilayer. Residues 227–412 (HISLASRSRV…AAREKKVTRT (186 aa)) lie on the Cytoplasmic side of the membrane. A compositionally biased stretch (basic residues) spans 236–250 (VRRHKPESRKERKGK). The segment at 236-343 (VRRHKPESRK…HPRVNPTSKW (108 aa)) is disordered. Over residues 270 to 285 (RAVEVKEEVRNGKVDD) the composition is skewed to basic and acidic residues. Polar residues-rich tracts occupy residues 287–296 (PSAQTEATGQ) and 304–314 (NESSTVSMTQT). A helical transmembrane segment spans residues 413 to 433 (IFAILLAFILTWTPYNVMVLI). The Extracellular portion of the chain corresponds to 434–447 (NTFCETCVPETVWS). A helical transmembrane segment spans residues 448-467 (IGYWLCYVNSTINPACYALC). The Cytoplasmic segment spans residues 468-490 (NATFKKTFKHLLMCQYRNIGTAR).

This sequence belongs to the G-protein coupled receptor 1 family. Muscarinic acetylcholine receptor subfamily. CHRM4 sub-subfamily. Expressed in heart and brain.

The protein resides in the cell membrane. It is found in the postsynaptic cell membrane. The muscarinic acetylcholine receptor mediates various cellular responses, including inhibition of adenylate cyclase, breakdown of phosphoinositides and modulation of potassium channels through the action of G proteins. Primary transducing effect is inhibition of adenylate cyclase. May couple to multiple functional responses in cell lines. This Gallus gallus (Chicken) protein is Muscarinic acetylcholine receptor M4 (CHRM4).